Consider the following 257-residue polypeptide: Acetylglutamate kinase (257 aa).

Substrate is bound by residues 43-44 (GG), Arg-65, and Asn-157. Residues 180-185 (DVSGIL) and 208-210 (IIT) each bind ATP.

The protein belongs to the acetylglutamate kinase family. ArgB subfamily. In terms of assembly, homodimer.

The protein localises to the cytoplasm. It catalyses the reaction N-acetyl-L-glutamate + ATP = N-acetyl-L-glutamyl 5-phosphate + ADP. Its pathway is amino-acid biosynthesis; L-arginine biosynthesis; N(2)-acetyl-L-ornithine from L-glutamate: step 2/4. Catalyzes the ATP-dependent phosphorylation of N-acetyl-L-glutamate. This is Acetylglutamate kinase from Pectobacterium carotovorum subsp. carotovorum (strain PC1).